The primary structure comprises 56 residues: Per os infectivity factor AC110 (56 aa).

In terms of biological role, plays an essential role in the process of oral infection. May participate in the crossing of occlusion-derived virions through the host peritrophic membrane during oral infection. The polypeptide is Per os infectivity factor AC110 (Autographa californica nuclear polyhedrosis virus (AcMNPV)).